Reading from the N-terminus, the 429-residue chain is Trigger factor (429 aa).

A PPIase FKBP-type domain is found at E161–P246.

It belongs to the FKBP-type PPIase family. Tig subfamily. As to quaternary structure, homodimer and monomer. In vivo most of the ribosomes are in complex with monomeric TF. Uncomplexed TF, however, is in a monomer-dimer equilibrium with approximately two thirds of TF existing in a dimeric state.

The protein resides in the cytoplasm. It catalyses the reaction [protein]-peptidylproline (omega=180) = [protein]-peptidylproline (omega=0). Functionally, involved in protein export. Acts as a chaperone by maintaining the newly synthesized protein in an open conformation. Functions as a peptidyl-prolyl cis-trans isomerase. The chain is Trigger factor from Escherichia coli O45:K1 (strain S88 / ExPEC).